A 98-amino-acid polypeptide reads, in one-letter code: Integration host factor subunit alpha (98 aa).

Residues 49-70 form a disordered region; that stretch reads FGNFDLRDKNQRPGRNPKTGED.

The protein belongs to the bacterial histone-like protein family. As to quaternary structure, heterodimer of an alpha and a beta chain.

Functionally, this protein is one of the two subunits of integration host factor, a specific DNA-binding protein that functions in genetic recombination as well as in transcriptional and translational control. The protein is Integration host factor subunit alpha of Sodalis glossinidius (strain morsitans).